The primary structure comprises 57 residues: uncharacterized protein (57 aa).

A disordered region spans residues 1 to 57 (MANHRGGSGNFAEDRERASEAGKKGGQHSGGNFKNDPQRASEAGKKGGKSSHGKSDN). Composition is skewed to basic and acidic residues over residues 12–23 (AEDRERASEAGK) and 36–45 (DPQRASEAGK). Residues 46–57 (KGGKSSHGKSDN) show a composition bias toward basic residues.

This sequence belongs to the con-10 family.

This is an uncharacterized protein from Escherichia coli (strain K12).